A 259-amino-acid chain; its full sequence is Small ribosomal subunit protein eS4 (259 aa).

The S4 RNA-binding domain occupies 41 to 100; that stretch reads LPLSLFLRNRLKYALNYTEAKKILTQRVVRVDGKVRTCHKFPTGFMDVVAIERTNEYFRM.

This sequence belongs to the eukaryotic ribosomal protein eS4 family.

In Caenorhabditis elegans, this protein is Small ribosomal subunit protein eS4 (rps-4).